The chain runs to 690 residues: SWI/SNF-related matrix-associated actin-dependent regulator of chromatin subfamily A-like protein 1 homolog (690 aa).

Residues 30 to 49 (MQAAANATASTSSAAPPAPP) are disordered. Residues 31 to 44 (QAAANATASTSSAA) show a composition bias toward low complexity. The HARP domain occupies 92 to 170 (PTSLIKPTIG…AVKVELEPLP (79 aa)). The 159-residue stretch at 209–367 (IFALERDGRI…FTQIRLIDHK (159 aa)) folds into the Helicase ATP-binding domain. 222–229 (DEMGLGKS) is a binding site for ATP. Positions 316–319 (DESH) match the DESH box motif. A Nuclear localization signal motif is present at residues 411–428 (RRLKADVLKDLPEKRREV). Positions 482–639 (ILENYFYPDA…TFRTADKMHL (158 aa)) constitute a Helicase C-terminal domain.

Belongs to the SNF2/RAD54 helicase family. SMARCAL1 subfamily.

The protein localises to the nucleus. It catalyses the reaction ATP + H2O = ADP + phosphate + H(+). Functionally, ATP-dependent annealing helicase that catalyzes the rewinding of the stably unwound DNA. This chain is SWI/SNF-related matrix-associated actin-dependent regulator of chromatin subfamily A-like protein 1 homolog, found in Caenorhabditis elegans.